The following is a 259-amino-acid chain: Activator of lactoyl-CoA dehydratase (259 aa).

The [4Fe-4S] cluster site is built by Cys-125 and Cys-164.

Homodimer. [4Fe-4S] cluster is required as a cofactor.

Its function is as follows. Required for the activation of lactoyl-CoA dehydratase. This protein is extremely sensitive towards oxygen. This Anaerotignum propionicum (Clostridium propionicum) protein is Activator of lactoyl-CoA dehydratase (lcdC).